We begin with the raw amino-acid sequence, 1040 residues long: Multidrug resistance protein MdtB (1040 aa).

12 helical membrane passes run 25 to 45, 347 to 367, 369 to 389, 396 to 416, 440 to 460, 472 to 492, 537 to 557, 863 to 883, 888 to 908, 910 to 930, 968 to 988, and 998 to 1018; these read LLMAAILLAGIIGYRFLPVAA, LMLAIALVVMIIYLFLRNIPA, IIPGVAVPLSLIGTFAVMVFL, LTLMALTIATGFVVDDAIVVI, IGFTIISLTFSLIAVLIPLLF, FAVTLAVAILISAVVSLTLTP, WLTLSVAFATLLLSVMLWIVI, LGSTVWLIVAAVVAMYIVLGV, FIHPITILSTLPTAGVGALLA, IIAGSELDIIAIIGIILLIGI, ILMTTLAALLGALPLMLSTGV, and IAMVGGLLVSQVLTLFTTPVI.

It belongs to the resistance-nodulation-cell division (RND) (TC 2.A.6) family. MdtB subfamily. As to quaternary structure, part of a tripartite efflux system composed of MdtA, MdtB and MdtC. MdtB forms a heteromultimer with MdtC.

The protein localises to the cell inner membrane. The chain is Multidrug resistance protein MdtB from Salmonella agona (strain SL483).